Here is a 474-residue protein sequence, read N- to C-terminus: Adenosylhomocysteinase (474 aa).

Positions 61, 136, and 196 each coordinate substrate. NAD(+) is bound at residue 197 to 199 (TTT). Residues Lys226 and Asp230 each coordinate substrate. Residues Asn231, 260-265 (GYGDVG), Glu283, Asn318, 339-341 (IGH), and Asn384 each bind NAD(+).

It belongs to the adenosylhomocysteinase family. Requires NAD(+) as cofactor.

Its subcellular location is the cytoplasm. The enzyme catalyses S-adenosyl-L-homocysteine + H2O = L-homocysteine + adenosine. Its pathway is amino-acid biosynthesis; L-homocysteine biosynthesis; L-homocysteine from S-adenosyl-L-homocysteine: step 1/1. Its function is as follows. May play a key role in the regulation of the intracellular concentration of adenosylhomocysteine. The chain is Adenosylhomocysteinase from Ralstonia pickettii (strain 12J).